A 197-amino-acid chain; its full sequence is Probable calcium-binding protein CML21 (197 aa).

Positions 1-33 (MLRPPPPSSVLTASAAAARPPASVVQPQRQAAH) are disordered. Positions 9-30 (SVLTASAAAARPPASVVQPQRQ) are enriched in low complexity. 3 EF-hand domains span residues 37–72 (AETL…LGAR), 126–161 (EKEA…MGLP), and 164–197 (ACMA…AAGN). Ca(2+)-binding residues include D50, D52, D54, E61, D139, D141, D143, Y145, E150, D177, D179, D181, R183, and E188.

Functionally, potential calcium sensor. The polypeptide is Probable calcium-binding protein CML21 (CML21) (Oryza sativa subsp. japonica (Rice)).